The primary structure comprises 36 residues: Photosystem II reaction center protein M (36 aa).

A helical membrane pass occupies residues 5–25 (ILAFIATALFILVPTAFLLII).

The protein belongs to the PsbM family. PSII is composed of 1 copy each of membrane proteins PsbA, PsbB, PsbC, PsbD, PsbE, PsbF, PsbH, PsbI, PsbJ, PsbK, PsbL, PsbM, PsbT, PsbX, PsbY, PsbZ, Psb30/Ycf12, at least 3 peripheral proteins of the oxygen-evolving complex and a large number of cofactors. It forms dimeric complexes.

The protein resides in the plastid. The protein localises to the chloroplast thylakoid membrane. Functionally, one of the components of the core complex of photosystem II (PSII). PSII is a light-driven water:plastoquinone oxidoreductase that uses light energy to abstract electrons from H(2)O, generating O(2) and a proton gradient subsequently used for ATP formation. It consists of a core antenna complex that captures photons, and an electron transfer chain that converts photonic excitation into a charge separation. This subunit is found at the monomer-monomer interface. This Panax ginseng (Korean ginseng) protein is Photosystem II reaction center protein M.